A 953-amino-acid chain; its full sequence is Zinc finger protein 507 (953 aa).

Serine 95 carries the post-translational modification Phosphoserine. 3 C2H2-type zinc fingers span residues 125–147, 155–185, and 248–270; these read YQCS…IKQH, LMCS…ANIH, and YRCL…AWKH. The residue at position 427 (serine 427) is a Phosphoserine. The segment at 470–489 is disordered; the sequence is KGLATDENAPPGRRRTNSES. 5 C2H2-type zinc fingers span residues 641–663, 669–691, 697–720, 758–780, and 786–808; these read YRCR…LRVH, YQCP…MIHH, YQCK…REQH, YRCD…RRIH, and YRCS…MWKH. The interval 831–891 is disordered; the sequence is GRVLGKTPGK…KLSPTSNTSY (61 aa). Residues 854–891 are compositionally biased toward polar residues; the sequence is TGSSENAVSSSELMSQTPSEVLGTNENEKLSPTSNTSY. Residues 911-933 form a C2H2-type 9 zinc finger; it reads FCCCICGFESTSKENLLDHMKEH.

The protein belongs to the krueppel C2H2-type zinc-finger protein family.

The protein resides in the nucleus. Its function is as follows. May be involved in transcriptional regulation. This Pongo abelii (Sumatran orangutan) protein is Zinc finger protein 507 (ZNF507).